The primary structure comprises 419 residues: Tyrosine--tRNA ligase (419 aa).

Tyr34 serves as a coordination point for L-tyrosine. A 'HIGH' region motif is present at residues 39-48; the sequence is PSGDSMHIGH. The L-tyrosine site is built by Tyr168 and Gln172. Positions 230–234 match the 'KMSKS' region motif; it reads KFGKS. Lys233 contacts ATP. The 67-residue stretch at 352–418 folds into the S4 RNA-binding domain; that stretch reads VNLVDWLVTL…GKKKYFLVSY (67 aa).

It belongs to the class-I aminoacyl-tRNA synthetase family. TyrS type 1 subfamily. In terms of assembly, homodimer.

It localises to the cytoplasm. The enzyme catalyses tRNA(Tyr) + L-tyrosine + ATP = L-tyrosyl-tRNA(Tyr) + AMP + diphosphate + H(+). Catalyzes the attachment of tyrosine to tRNA(Tyr) in a two-step reaction: tyrosine is first activated by ATP to form Tyr-AMP and then transferred to the acceptor end of tRNA(Tyr). This is Tyrosine--tRNA ligase from Listeria innocua serovar 6a (strain ATCC BAA-680 / CLIP 11262).